A 241-amino-acid chain; its full sequence is Endodeoxyribonuclease NucC (241 aa).

Active-site residues include aspartate 73, glutamate 104, and lysine 106. Aspartate 73 and glutamate 104 together coordinate Mg(2+).

This sequence belongs to the NucC endonuclease family. As to quaternary structure, self-oligomerizes. Forms homotrimers; in the presence of cAAA the trimers associate face-to-face to form homohexamers. The 2 cAAA-binding sites are on the exterior of the hexamer at the three-way junction, there are maximally 2 cyclic nucleotides per hexamer. It depends on Mg(2+) as a cofactor.

With respect to regulation, activated by cAAA and to a lesser extent cAA; both cyclic nucleotides are products of its cognate CD-NTase. Cyclic nucleotide binding causes hexamerization. Functionally, effector DNase of a CBASS antivirus system. CBASS (cyclic oligonucleotide-based antiphage signaling system) provides immunity against bacteriophage. The CD-NTase protein synthesizes cyclic nucleotides in response to infection; these serve as specific second messenger signals. The signals activate a diverse range of effectors, leading to bacterial cell death and thus abortive phage infection. A type III-C(AAA) CBASS system. A cyclic nucleotide-activated dsDNase. In the presence of 3',3',3'-cyclic AMP-AMP-AMP (cAAA) and to a lesser extent cyclic-di-AMP (c-di-AMP), endonucleolytically degrades dsDNA. Binds one cAAA in a pocket on one surface of the trimer; cAAA binding promotes hexamerization which is probably necessary for nuclease activation. The nuclease digests dsDNA to about 50 bp lengths. DNA has been modeled to contact a pair of juxtaposed active sites (one from each layer of the hexamer), accounting for cleavage on both strands. This chain is Endodeoxyribonuclease NucC, found in Pseudomonas aeruginosa.